The sequence spans 234 residues: Adenosine 5'-phosphosulfate reductase (234 aa).

4 residues coordinate [4Fe-4S] cluster: Cys120, Cys121, Cys203, and Cys206. Cys229 (nucleophile; cysteine thiosulfonate intermediate) is an active-site residue.

Belongs to the PAPS reductase family. CysH subfamily. Requires [4Fe-4S] cluster as cofactor.

It is found in the cytoplasm. The catalysed reaction is [thioredoxin]-disulfide + sulfite + AMP + 2 H(+) = adenosine 5'-phosphosulfate + [thioredoxin]-dithiol. The protein operates within sulfur metabolism; hydrogen sulfide biosynthesis; sulfite from sulfate. In terms of biological role, catalyzes the formation of sulfite from adenosine 5'-phosphosulfate (APS) using thioredoxin as an electron donor. The chain is Adenosine 5'-phosphosulfate reductase from Bacillus cereus (strain AH820).